We begin with the raw amino-acid sequence, 2344 residues long: Mucin-4 (2344 aa).

A signal peptide spans 1 to 30 (MRGPHGVSWRVPWLCLSCLCSCLLLLPVNT). Residues 32-46 (TTSAPKTSTALPSST) show a composition bias toward low complexity. 5 disordered regions span residues 32–760 (TTSA…QGSI), 773–1036 (QKMS…TTST), 1072–1130 (VPSL…TPSV), 1171–1197 (STVA…MGAS), and 1233–1269 (SGLT…TVPP). Residues 47–100 (NPSQMTSQVSNPTASSYRMTKNTGQASPMVTSSSITTLPQSQHTGSMKTTRNPQ) show a composition bias toward polar residues. A variable number of tandem repeats (VNTR) region spans residues 81–1006 (ITTLPQSQHT…VSTLVTSTQE (926 aa)). Low complexity-rich tracts occupy residues 101-116 (TTGT…ASSS) and 123-137 (TTSQ…TTTS). O-linked (GalNAc...) threonine glycosylation is present at Thr-133. A compositionally biased stretch (polar residues) spans 142-225 (ESSSPPSTSV…GGMKTTRNPQ (84 aa)). Over residues 226–273 (TTGTTEVTTTLSASSSDHPTSSPESTPGNTAPRTTETSTTTTTKVLMT) the composition is skewed to low complexity. Residues 274 to 305 (SLQQKLPTGSTLGTSTQELTTLPQSQHTGIMK) are compositionally biased toward polar residues. Composition is skewed to low complexity over residues 306–322 (TTSR…TTRT) and 335–349 (TSSQ…TTTS). The segment covering 373–436 (SGDTGHTMAV…GMKTTRNPQR (64 aa)) has biased composition (polar residues). O-linked (GalNAc...) threonine glycosylation is found at Thr-391 and Thr-392. Over residues 437 to 446 (TTPTEVTTST) the composition is skewed to low complexity. Positions 447 to 468 (LSASSSDQVQVETTSRATLSPD) are enriched in polar residues. Over residues 469-492 (TTTTSHAPSVSSSSPSPPSTEGTS) the composition is skewed to low complexity. An O-linked (GalNAc...) threonine glycan is attached at Thr-470. Residue Ser-479 is glycosylated (O-linked (GalNAc...) serine). A compositionally biased stretch (polar residues) spans 493 to 509 (VDTGLTTAVTTQDSTPA). Residues 510–546 (TTQGSLTSSSQTLSTVSPLSTSTQETSTQELTSSQSQ) show a composition bias toward low complexity. A compositionally biased stretch (polar residues) spans 547 to 580 (HTGSMKTTHNPQTTRNTEVTTTLSASSSDQVQVE). The segment covering 581–594 (TTSQTTLSDATTTS) has biased composition (low complexity). Residues 599-682 (ESSSPPSTSD…GGMKTTRNPQ (84 aa)) are compositionally biased toward polar residues. 2 stretches are compositionally biased toward low complexity: residues 683–698 (TTGT…ASSS) and 705–719 (TSSQ…TTTS). 2 stretches are compositionally biased toward polar residues: residues 724–760 (ESSS…QGSI) and 773–807 (QKMS…SSRP). A compositionally biased stretch (low complexity) spans 808 to 828 (QTTSVTSTLSSSPSGSTPVQT). Over residues 829–868 (RSVTSSSDERTNPTSSGVSNTSPATTEVLTPTSSPESTPG) the composition is skewed to polar residues. Residues 869 to 915 (NTAPRTTETSTTTTTKVLMTSLQQKLPTGSTLGTSTPTEVTTTLSAS) show a composition bias toward low complexity. Over residues 916-994 (SSDQVQVETT…ISVTPSTQKM (79 aa)) the composition is skewed to polar residues. Residues 995-1015 (STVSTLVTSTQELTSSQSQRT) are compositionally biased toward low complexity. Over residues 1016-1026 (GSMGTSSKPQA) the composition is skewed to polar residues. Positions 1027–1036 (TTPTEVTTST) are enriched in low complexity. A compositionally biased stretch (polar residues) spans 1072-1083 (VPSLMHSSKPQA). A compositionally biased stretch (low complexity) spans 1084–1096 (TTPTEVTTSTLSS). The span at 1097 to 1116 (FSRGSTQTQTVSWETSSSGK) shows a compositional bias: polar residues. Low complexity-rich tracts occupy residues 1118 to 1130 (TAPS…TPSV), 1175 to 1188 (HRQS…HSQS), and 1233 to 1267 (SGLT…RSTV). Residues 1332 to 1492 (GHSGVMLISL…TGYTGRCGPT (161 aa)) form the NIDO domain. The disordered stretch occupies residues 1574 to 1597 (GRHRTGLAAGTTSPLSASSTSSGG). A compositionally biased stretch (low complexity) spans 1580–1597 (LAAGTTSPLSASSTSSGG). The VWFD domain occupies 1609–1804 (RPAWTFGDPH…HYGMTSETNG (196 aa)). Asn-1644, Asn-1660, Asn-1672, Asn-1689, Asn-1698, Asn-1704, Asn-1715, Asn-1724, Asn-1759, Asn-1780, Asn-1787, Asn-1829, Asn-1874, Asn-1926, Asn-1951, Asn-1974, Asn-1981, Asn-2029, and Asn-2048 each carry an N-linked (GlcNAc...) asparagine glycan. Residues 2047 to 2086 (QNHSCPVNYCYNHGHCDISGPPDCQPTCTCAPAFTGNRCF) form the EGF-like 1 domain. 3 disulfides stabilise this stretch: Cys-2051/Cys-2062, Cys-2056/Cys-2074, and Cys-2076/Cys-2085. N-linked (GlcNAc...) asparagine glycans are attached at residues Asn-2114 and Asn-2121. A helical membrane pass occupies residues 2173–2193 (GPLIHYLNNQLISAVMEAFLL). A glycan (N-linked (GlcNAc...) asparagine) is linked at Asn-2227. Residues 2256–2295 (VSPCSEGYCHNGGQCKHLPDGPQCTCATFSIYTSWGERCE) enclose the EGF-like 2 domain. Intrachain disulfides connect Cys-2259–Cys-2270, Cys-2264–Cys-2279, and Cys-2281–Cys-2294. A helical transmembrane segment spans residues 2301–2321 (LGAFFGILFGALGALLLLAIL).

As to quaternary structure, a heterodimeric complex, composed of a mucin-4 alpha chain and a cysteine-rich transmembrane mucin-4 beta chain. Mucin-4 beta chain interacts with ERBB2 via the EGF-like domain 1. In nonpolarized cells, associates with ERBB2 and ERBB3. Proteolytically cleaved into 2 subunits, mucin-4 alpha chain and mucin-4 beta chain. In terms of processing, mucin-4 alpha subunit is highly O-glycosylated. Post-translationally, mucin-4 beta subunit is predominantly N-glycosylated. In terms of tissue distribution, expression is developmentally regulated in the mammary gland, dramatically increases in the lactating gland compared with the virgin mammary gland, while decreasing again during mammary gland involution. Expressed in 13762 ascites cells. Overexpressed in some aggressive mammary tumors. Overexpression seems to block cell-cell and cell-matrix interactions to protect tumor cells from immune surveillance, and to promote metastasis.

The protein resides in the cell membrane. The protein localises to the secreted. Its function is as follows. Membrane-bound mucin, a family of highly glycosylated proteins that constitute the major component of the mucus, the slimy and viscous secretion covering epithelial surfaces. These glycoproteins play important roles in the protection of the epithelium and are implicated in epithelial renewal and differentiation. Regulates cellular behavior through both anti-adhesive effects on cell-cell and cell-extracellular matrix interactions and its ability to act as an intramembrane ligand for ERBB2. Plays an important role in proliferation and differentiation of epithelial cells by inducing specific phosphorylation of ERBB2. In polarized epithelial cells, segregates ERBB2 and other ERBB receptors and prevents ERBB2 from acting as a coreceptor. The interaction with ERBB2 leads to enhanced expression of CDKN1B. The formation of a MUC4-ERBB2-ERBB3-NRG1 complex leads to down-regulation of CDKN1B, resulting in repression of apoptosis and stimulation of proliferation. Its ability to promote tumor growth may be mainly due to repression of apoptosis as opposed to proliferation. In Rattus norvegicus (Rat), this protein is Mucin-4 (Muc4).